The primary structure comprises 282 residues: Glycine betaine transport system permease protein OpuAB (282 aa).

The Extracellular portion of the chain corresponds to 1–18; that stretch reads MDRLPRIPLADIIDRFVD. The helical transmembrane segment at 19–39 threads the bilayer; it reads WITMTFGGFFDGIANGLAAFV. At 40 to 44 the chain is on the cytoplasmic side; that stretch reads NGIVT. A helical transmembrane segment spans residues 45–65; the sequence is GLGFIPSILLTIIFAALAWWI. Residues 66–69 are Extracellular-facing; sequence STRG. Residues 70–90 traverse the membrane as a helical segment; that stretch reads IALFTLIGFLLIDYLGYWDPM. One can recognise an ABC transmembrane type-1 domain in the interval 90 to 269; that stretch reads MLQTLALVLT…IVAITLDRIT (180 aa). Residues 91–93 are Cytoplasmic-facing; sequence LQT. A helical membrane pass occupies residues 94 to 114; it reads LALVLTSVIISIVVGVPIGIW. The Extracellular portion of the chain corresponds to 115–137; the sequence is ASQKETVRRIVTPILDLMQTMPA. Residues 138–158 traverse the membrane as a helical segment; the sequence is FVYLLPAIFFFNIGVVPGVVA. Residues 159 to 215 lie on the Cytoplasmic side of the membrane; that stretch reads SVIFAMPPTIRMTVLGIKQVPADLIEATEAFGSTTAQRLFKVQLPLATKTILAGINQ. The helical transmembrane segment at 216–236 threads the bilayer; the sequence is SIMLALSMVVIAAMVGAPGLG. Residues 237 to 242 lie on the Extracellular side of the membrane; sequence SEVYSA. The helical transmembrane segment at 243-263 threads the bilayer; sequence VTQLKTGVGVEAGIAIVIVAI. The Cytoplasmic segment spans residues 264–282; the sequence is TLDRITQNIKVKKKSRGNA.

It belongs to the binding-protein-dependent transport system permease family. CysTW subfamily. In terms of assembly, the complex is composed of two ATP-binding proteins (OpuAA), two transmembrane proteins (OpuAB) and a solute-binding protein (OpuAC).

The protein resides in the cell membrane. Involved in a multicomponent binding-protein-dependent transport system for glycine betaine; probably responsible for the translocation of the substrate across the membrane. In Bacillus subtilis (strain 168), this protein is Glycine betaine transport system permease protein OpuAB (opuAB).